A 348-amino-acid polypeptide reads, in one-letter code: Dihydroorotase (348 aa).

Zn(2+) contacts are provided by His17 and His19. Substrate is bound by residues His19–Arg21 and Asn45. Zn(2+) is bound by residues Lys103, His140, and His178. Position 103 is an N6-carboxylysine (Lys103). Position 140 (His140) interacts with substrate. Leu223 is a binding site for substrate. Asp251 is a Zn(2+) binding site. Asp251 is a catalytic residue. Substrate is bound by residues His255 and Ala267.

It belongs to the metallo-dependent hydrolases superfamily. DHOase family. Class II DHOase subfamily. As to quaternary structure, homodimer. Zn(2+) is required as a cofactor.

The catalysed reaction is (S)-dihydroorotate + H2O = N-carbamoyl-L-aspartate + H(+). It functions in the pathway pyrimidine metabolism; UMP biosynthesis via de novo pathway; (S)-dihydroorotate from bicarbonate: step 3/3. In terms of biological role, catalyzes the reversible cyclization of carbamoyl aspartate to dihydroorotate. This chain is Dihydroorotase, found in Escherichia coli O7:K1 (strain IAI39 / ExPEC).